The sequence spans 135 residues: Large ribosomal subunit protein uL16 (135 aa).

It belongs to the universal ribosomal protein uL16 family. In terms of assembly, part of the 50S ribosomal subunit.

Binds 23S rRNA and is also seen to make contacts with the A and possibly P site tRNAs. The sequence is that of Large ribosomal subunit protein uL16 (rplP) from Carsonella ruddii (strain PV).